The following is a 1551-amino-acid chain: Pentafunctional AROM polypeptide (1551 aa).

The interval 1–379 (MSIEKVPILG…YQLKAHEVSK (379 aa)) is 3-dehydroquinate synthase. Residues 42–44 (DTN), 80–83 (ENNK), 111–113 (GGV), and aspartate 116 each bind NAD(+). Arginine 127 contributes to the 7-phospho-2-dehydro-3-deoxy-D-arabino-heptonate binding site. An NAD(+)-binding site is contributed by 136–137 (TT). 7-phospho-2-dehydro-3-deoxy-D-arabino-heptonate is bound by residues aspartate 143 and lysine 149. Lysine 158 serves as a coordination point for NAD(+). Asparagine 159 serves as a coordination point for 7-phospho-2-dehydro-3-deoxy-D-arabino-heptonate. Residues 176–179 (YLES) and asparagine 187 contribute to the NAD(+) site. Residue glutamate 191 participates in Zn(2+) binding. 7-phospho-2-dehydro-3-deoxy-D-arabino-heptonate-binding positions include 191 to 194 (EVVK) and lysine 243. Glutamate 253 functions as the Proton acceptor; for 3-dehydroquinate synthase activity in the catalytic mechanism. 7-phospho-2-dehydro-3-deoxy-D-arabino-heptonate contacts are provided by residues 257 to 261 (RNLLN) and histidine 264. Histidine 264 contributes to the Zn(2+) binding site. The active-site Proton acceptor; for 3-dehydroquinate synthase activity is the histidine 268. 2 residues coordinate 7-phospho-2-dehydro-3-deoxy-D-arabino-heptonate: histidine 280 and lysine 351. Histidine 280 contributes to the Zn(2+) binding site. Residues 392-838 (VHPFKQPPQE…WDILHSKFNI (447 aa)) form an EPSP synthase region. A shikimate kinase region spans residues 858-1048 (DKSIIIIGMR…IPSGRSAALS (191 aa)). Residue 865–872 (GMRGTGKS) participates in ATP binding. The 3-dehydroquinase stretch occupies residues 1049–1258 (LTVPDLNAIS…NEDGLLTIKE (210 aa)). The active-site Schiff-base intermediate with substrate; for 3-dehydroquinate dehydratase activity is lysine 1194. Residues 1271–1551 (AKKFWVIGSP…DVIHRAVVEE (281 aa)) are shikimate dehydrogenase.

The protein in the N-terminal section; belongs to the sugar phosphate cyclases superfamily. Dehydroquinate synthase family. It in the 2nd section; belongs to the EPSP synthase family. In the 3rd section; belongs to the shikimate kinase family. This sequence in the 4th section; belongs to the type-I 3-dehydroquinase family. The protein in the C-terminal section; belongs to the shikimate dehydrogenase family. Homodimer. It depends on Zn(2+) as a cofactor.

It is found in the cytoplasm. It carries out the reaction 7-phospho-2-dehydro-3-deoxy-D-arabino-heptonate = 3-dehydroquinate + phosphate. The enzyme catalyses 3-dehydroquinate = 3-dehydroshikimate + H2O. The catalysed reaction is shikimate + NADP(+) = 3-dehydroshikimate + NADPH + H(+). It catalyses the reaction shikimate + ATP = 3-phosphoshikimate + ADP + H(+). It carries out the reaction 3-phosphoshikimate + phosphoenolpyruvate = 5-O-(1-carboxyvinyl)-3-phosphoshikimate + phosphate. The protein operates within metabolic intermediate biosynthesis; chorismate biosynthesis; chorismate from D-erythrose 4-phosphate and phosphoenolpyruvate: step 2/7. It functions in the pathway metabolic intermediate biosynthesis; chorismate biosynthesis; chorismate from D-erythrose 4-phosphate and phosphoenolpyruvate: step 3/7. It participates in metabolic intermediate biosynthesis; chorismate biosynthesis; chorismate from D-erythrose 4-phosphate and phosphoenolpyruvate: step 4/7. Its pathway is metabolic intermediate biosynthesis; chorismate biosynthesis; chorismate from D-erythrose 4-phosphate and phosphoenolpyruvate: step 5/7. The protein operates within metabolic intermediate biosynthesis; chorismate biosynthesis; chorismate from D-erythrose 4-phosphate and phosphoenolpyruvate: step 6/7. The AROM polypeptide catalyzes 5 consecutive enzymatic reactions in prechorismate polyaromatic amino acid biosynthesis. This is Pentafunctional AROM polypeptide from Candida tropicalis (strain ATCC MYA-3404 / T1) (Yeast).